The chain runs to 539 residues: UDP-N-acetylmuramate--L-alanine ligase (539 aa).

165-171 contributes to the ATP binding site; the sequence is GTHGKTT.

The protein belongs to the MurCDEF family.

The protein resides in the cytoplasm. It carries out the reaction UDP-N-acetyl-alpha-D-muramate + L-alanine + ATP = UDP-N-acetyl-alpha-D-muramoyl-L-alanine + ADP + phosphate + H(+). Its pathway is cell wall biogenesis; peptidoglycan biosynthesis. Functionally, cell wall formation. The chain is UDP-N-acetylmuramate--L-alanine ligase from Trichodesmium erythraeum (strain IMS101).